The following is a 230-amino-acid chain: Lipopolysaccharide core heptose(II) kinase WaaY (230 aa).

The protein belongs to the protein kinase superfamily. RfaY/WaaY family.

It catalyses the reaction alpha-D-Glc-(1-&gt;3)-[L-alpha-D-Hep-(1-&gt;7)]-L-alpha-D-Hep-(1-&gt;3)-4-O-PO3(2-)-L-alpha-D-Hep-(1-&gt;5)-[alpha-Kdo-(2-&gt;4)]-alpha-Kdo-(2-&gt;6)-lipid A + ATP = alpha-D-Glc-(1-&gt;3)-[L-alpha-D-Hep-(1-&gt;7)]-4-O-PO3(2-)-L-alpha-D-Hep-(1-&gt;3)-4-O-PO3(2-)-L-alpha-D-Hep-(1-&gt;5)-[alpha-Kdo-(2-&gt;4)]-alpha-Kdo-(2-&gt;6)-lipid A + ADP + H(+). Its pathway is bacterial outer membrane biogenesis; LPS core biosynthesis. Its function is as follows. Kinase involved in the biosynthesis of the core oligosaccharide region of lipopolysaccharide (LPS). Catalyzes the phosphorylation of the second heptose unit (HepII) of the inner core. The polypeptide is Lipopolysaccharide core heptose(II) kinase WaaY (Escherichia coli).